The following is a 391-amino-acid chain: ATP phosphoribosyltransferase regulatory subunit (391 aa).

Belongs to the class-II aminoacyl-tRNA synthetase family. HisZ subfamily. Heteromultimer composed of HisG and HisZ subunits.

It is found in the cytoplasm. Its pathway is amino-acid biosynthesis; L-histidine biosynthesis; L-histidine from 5-phospho-alpha-D-ribose 1-diphosphate: step 1/9. Required for the first step of histidine biosynthesis. May allow the feedback regulation of ATP phosphoribosyltransferase activity by histidine. The protein is ATP phosphoribosyltransferase regulatory subunit of Bacillus pumilus (strain SAFR-032).